The sequence spans 58 residues: MTCTRTLLVLNRMLALKANFVLHSVKSYLNVSGVNKTLPAKGSAGVKNGFILSHLGCQ.

It localises to the plastid. The protein localises to the chloroplast. This is an uncharacterized protein from Chlamydomonas reinhardtii (Chlamydomonas smithii).